A 382-amino-acid polypeptide reads, in one-letter code: Non-structural maintenance of chromosomes element 4 homolog A (382 aa).

Positions 1–21 (MSGDSSGRRPEGRGRGRDPHR) are enriched in basic and acidic residues. Residues 1–80 (MSGDSSGRRP…ASLEEETDPS (80 aa)) are disordered. Positions 31–41 (RSPLSPGSRRG) are enriched in low complexity. Over residues 42–55 (AAPERREAPERPGL) the composition is skewed to basic and acidic residues. Over residues 56–78 (EDTEPSDSGDEMIDPASLEEETD) the composition is skewed to acidic residues. Phosphothreonine is present on T342. Residue S374 is modified to Phosphoserine.

This sequence belongs to the NSE4 family. Component of the SMC5-SMC6 complex which consists at least of SMC5, SMC6, NSMCE2, NSMCE1, NSMCE4A or EID3 and NSMCE3. NSMCE1, NSMCE4A or EID3 and NSMCE3 probably form a subcomplex that bridges the head domains of the SMC5:SMC6 heterodimer. Interacts with NSMCE3.

Its subcellular location is the nucleus. It is found in the chromosome. It localises to the telomere. Its function is as follows. Component of the SMC5-SMC6 complex, a complex involved in repair of DNA double-strand breaks by homologous recombination. The complex may promote sister chromatid homologous recombination by recruiting the SMC1-SMC3 cohesin complex to double-strand breaks. The complex is required for telomere maintenance via recombination and mediates sumoylation of shelterin complex (telosome) components. The protein is Non-structural maintenance of chromosomes element 4 homolog A (NSMCE4A) of Bos taurus (Bovine).